The primary structure comprises 585 residues: Arginine--tRNA ligase (585 aa).

The 'HIGH' region signature appears at 131-141; it reads ANPTGPMHVGH.

The protein belongs to the class-I aminoacyl-tRNA synthetase family. In terms of assembly, monomer.

It localises to the cytoplasm. It catalyses the reaction tRNA(Arg) + L-arginine + ATP = L-arginyl-tRNA(Arg) + AMP + diphosphate. The protein is Arginine--tRNA ligase of Bartonella tribocorum (strain CIP 105476 / IBS 506).